The primary structure comprises 116 residues: Large ribosomal subunit protein uL22 (116 aa).

Belongs to the universal ribosomal protein uL22 family. As to quaternary structure, part of the 50S ribosomal subunit.

In terms of biological role, this protein binds specifically to 23S rRNA; its binding is stimulated by other ribosomal proteins, e.g. L4, L17, and L20. It is important during the early stages of 50S assembly. It makes multiple contacts with different domains of the 23S rRNA in the assembled 50S subunit and ribosome. The globular domain of the protein is located near the polypeptide exit tunnel on the outside of the subunit, while an extended beta-hairpin is found that lines the wall of the exit tunnel in the center of the 70S ribosome. In Sulfurihydrogenibium sp. (strain YO3AOP1), this protein is Large ribosomal subunit protein uL22.